A 63-amino-acid polypeptide reads, in one-letter code: Protein DsrB (63 aa).

The protein belongs to the DsrB family.

In Yersinia pseudotuberculosis serotype O:3 (strain YPIII), this protein is Protein DsrB.